The sequence spans 329 residues: Endo-beta-N-acetylglucosaminidase F3 (329 aa).

Residues 1 to 39 constitute a signal peptide (or 40, or 41); it reads MKKIFFAQCSILLLMLGSCSKMTEDMTPESVNKEASVKS. Residues 48 to 329 form the GH18 domain; that stretch reads GVCIAYYITD…ANAVRDAVKN (282 aa). T88 is a glycosylation site (O-linked (Man...) threonine). E167 functions as the Proton donor in the catalytic mechanism.

Belongs to the glycosyl hydrolase 18 family. As to quaternary structure, monomer. Post-translationally, carbohydrate at Thr-88 consists of (2-OMe)Man1-4GlcNAcU1-4GlcU1-4Glc1-4(2-OMe)GlcU1-4[(2-OMe)Rham1-2]Man.

It is found in the secreted. It carries out the reaction an N(4)-(oligosaccharide-(1-&gt;3)-[oligosaccharide-(1-&gt;6)]-beta-D-Man-(1-&gt;4)-beta-D-GlcNAc-(1-&gt;4)-alpha-D-GlcNAc)-L-asparaginyl-[protein] + H2O = an oligosaccharide-(1-&gt;3)-[oligosaccharide-(1-&gt;6)]-beta-D-Man-(1-&gt;4)-D-GlcNAc + N(4)-(N-acetyl-beta-D-glucosaminyl)-L-asparaginyl-[protein]. Functionally, endohydrolysis of the di-N-acetylchitobiosyl unit in high-mannose glycopeptides and glycoproteins. Hydrolyzes bi- and triantennary glycans. The presence of a core-bound fucose greatly augments endo F3 activity on biantennary and, presumably, triantennary oligosaccharides. This is Endo-beta-N-acetylglucosaminidase F3 (endOF3) from Elizabethkingia meningoseptica (Chryseobacterium meningosepticum).